We begin with the raw amino-acid sequence, 170 residues long: Archaemetzincin (170 aa).

His110 serves as a coordination point for Zn(2+). The Proton acceptor role is filled by Glu111. Zn(2+) is bound by residues His114, His120, Cys121, Cys125, Cys144, and Cys147.

This sequence belongs to the peptidase M54 family. As to quaternary structure, monomer. It depends on Zn(2+) as a cofactor.

In terms of biological role, probable zinc metalloprotease whose natural substrate is unknown. This Nanoarchaeum equitans (strain Kin4-M) protein is Archaemetzincin.